Here is a 304-residue protein sequence, read N- to C-terminus: Non-specific ribonucleoside hydrolase RihC (304 aa).

Residue histidine 235 is part of the active site.

It belongs to the IUNH family. RihC subfamily.

Hydrolyzes both purine and pyrimidine ribonucleosides with a broad-substrate specificity. The sequence is that of Non-specific ribonucleoside hydrolase RihC from Salmonella paratyphi A (strain ATCC 9150 / SARB42).